A 235-amino-acid polypeptide reads, in one-letter code: Small ribosomal subunit protein uS3 (235 aa).

In terms of domain architecture, KH type-2 spans 39-107 (VRKFLNKELM…PAQINIAEVK (69 aa)).

It belongs to the universal ribosomal protein uS3 family. In terms of assembly, part of the 30S ribosomal subunit. Forms a tight complex with proteins S10 and S14.

Its function is as follows. Binds the lower part of the 30S subunit head. Binds mRNA in the 70S ribosome, positioning it for translation. This is Small ribosomal subunit protein uS3 from Actinobacillus succinogenes (strain ATCC 55618 / DSM 22257 / CCUG 43843 / 130Z).